The sequence spans 133 residues: Ribosome-binding factor A (133 aa).

It belongs to the RbfA family. In terms of assembly, monomer. Binds 30S ribosomal subunits, but not 50S ribosomal subunits or 70S ribosomes.

It localises to the cytoplasm. Its function is as follows. One of several proteins that assist in the late maturation steps of the functional core of the 30S ribosomal subunit. Associates with free 30S ribosomal subunits (but not with 30S subunits that are part of 70S ribosomes or polysomes). Required for efficient processing of 16S rRNA. May interact with the 5'-terminal helix region of 16S rRNA. This chain is Ribosome-binding factor A, found in Escherichia coli O127:H6 (strain E2348/69 / EPEC).